Consider the following 209-residue polypeptide: Octanoyltransferase (209 aa).

The region spanning 29 to 209 (EHTPDELWVV…CHQLQPEIDS (181 aa)) is the BPL/LPL catalytic domain. Substrate-binding positions include 71–78 (RGGQVTYH), 138–140 (SLG), and 151–153 (GLA). Cys169 functions as the Acyl-thioester intermediate in the catalytic mechanism.

The protein belongs to the LipB family.

The protein localises to the cytoplasm. The catalysed reaction is octanoyl-[ACP] + L-lysyl-[protein] = N(6)-octanoyl-L-lysyl-[protein] + holo-[ACP] + H(+). Its pathway is protein modification; protein lipoylation via endogenous pathway; protein N(6)-(lipoyl)lysine from octanoyl-[acyl-carrier-protein]: step 1/2. Its function is as follows. Catalyzes the transfer of endogenously produced octanoic acid from octanoyl-acyl-carrier-protein onto the lipoyl domains of lipoate-dependent enzymes. Lipoyl-ACP can also act as a substrate although octanoyl-ACP is likely to be the physiological substrate. This is Octanoyltransferase from Hydrogenovibrio crunogenus (strain DSM 25203 / XCL-2) (Thiomicrospira crunogena).